A 585-amino-acid chain; its full sequence is BURP domain-containing protein 17 (585 aa).

An N-terminal signal peptide occupies residues 1–20; that stretch reads MDRIFARFFCFLLIAAVSHA. The segment at 63-82 is disordered; that stretch reads GQRNYKSSVSHVAERSHRVD. Positions 363 to 584 constitute a BURP domain; it reads FFLEKNLQQG…QPDAVVWTRR (222 aa).

Expressed in leaves.

The protein is BURP domain-containing protein 17 (BURP17) of Oryza sativa subsp. japonica (Rice).